The primary structure comprises 904 residues: DNA polymerase I (904 aa).

Residues 186-279 (TPRQYPDFAA…DTLRLQPWDR (94 aa)) form the 5'-3' exonuclease domain. In terms of domain architecture, 3'-5' exonuclease spans 317–493 (RGGALAPGTV…LADALDAELA (177 aa)).

It belongs to the DNA polymerase type-A family. In terms of assembly, single-chain monomer with multiple functions.

It catalyses the reaction DNA(n) + a 2'-deoxyribonucleoside 5'-triphosphate = DNA(n+1) + diphosphate. Its function is as follows. In addition to polymerase activity, this DNA polymerase exhibits 3'-5' and 5'-3' exonuclease activity. The polypeptide is DNA polymerase I (polA) (Mycobacterium bovis (strain ATCC BAA-935 / AF2122/97)).